The following is a 166-amino-acid chain: Myosin regulatory light chain 2, ventricular/cardiac muscle isoform (166 aa).

Serine 2 carries the post-translational modification N,N,N-trimethylserine. Asparagine 14 carries the post-translational modification Deamidated asparagine. At serine 19 the chain carries Phosphoserine. 3 consecutive EF-hand domains span residues 24–59 (TQIQ…LGRV), 94–129 (DPEE…QAER), and 130–165 (FSKE…GEEK). Residues aspartate 37, asparagine 39, aspartate 41, and aspartate 48 each coordinate Ca(2+). The residue at position 52 (threonine 52) is a Phosphothreonine.

Myosin is a hexamer of 2 heavy chains and 4 light chains. Interacts with MYOC. In terms of processing, N-terminus is methylated by METTL11A/NTM1. Phosphorylated by MYLK3 and MYLK2; promotes cardiac muscle contraction and function. Dephosphorylated by PPP1CB complexed to PPP1R12B. The phosphorylated form in adult is expressed as gradients across the heart from endocardium (low phosphorylation) to epicardium (high phosphorylation); regulates cardiac torsion and workload distribution.

The protein resides in the cytoplasm. It is found in the myofibril. It localises to the sarcomere. The protein localises to the a band. In terms of biological role, contractile protein that plays a role in heart development and function. Following phosphorylation, plays a role in cross-bridge cycling kinetics and cardiac muscle contraction by increasing myosin lever arm stiffness and promoting myosin head diffusion; as a consequence of the increase in maximum contraction force and calcium sensitivity of contraction force. These events altogether slow down myosin kinetics and prolong duty cycle resulting in accumulated myosins being cooperatively recruited to actin binding sites to sustain thin filament activation as a means to fine-tune myofilament calcium sensitivity to force. During cardiogenesis plays an early role in cardiac contractility by promoting cardiac myofibril assembly. This is Myosin regulatory light chain 2, ventricular/cardiac muscle isoform from Bos taurus (Bovine).